We begin with the raw amino-acid sequence, 448 residues long: N-succinylarginine dihydrolase (448 aa).

Residues 19 to 28 (GGLSYGNVAS), N110, and 137 to 138 (HR) each bind substrate. E174 is an active-site residue. R214 contacts substrate. The active site involves H250. Substrate-binding residues include D252 and N365. C371 functions as the Nucleophile in the catalytic mechanism.

The protein belongs to the succinylarginine dihydrolase family. In terms of assembly, homodimer.

The catalysed reaction is N(2)-succinyl-L-arginine + 2 H2O + 2 H(+) = N(2)-succinyl-L-ornithine + 2 NH4(+) + CO2. It functions in the pathway amino-acid degradation; L-arginine degradation via AST pathway; L-glutamate and succinate from L-arginine: step 2/5. Its function is as follows. Catalyzes the hydrolysis of N(2)-succinylarginine into N(2)-succinylornithine, ammonia and CO(2). The polypeptide is N-succinylarginine dihydrolase (Pseudomonas paraeruginosa (strain DSM 24068 / PA7) (Pseudomonas aeruginosa (strain PA7))).